Consider the following 566-residue polypeptide: Branchpoint-bridging protein (566 aa).

Residues 1–14 (MAWRNQGITGSNNI) are compositionally biased toward polar residues. Positions 1–77 (MAWRNQGITG…NRWGDAQENK (77 aa)) are disordered. Positions 186–266 (YVPVNDYPEI…EKVNKAKKLV (81 aa)) constitute a KH domain. 2 CCHC-type zinc fingers span residues 304–321 (QACQ…DCPE) and 329–346 (IICR…DCPD). Basic and acidic residues predominate over residues 341 to 352 (ARDCPDRQRGSD). Disordered stretches follow at residues 341–367 (ARDC…RAIG) and 382–566 (ELSG…PPSA). Positions 355–364 (NGGGYGGGRR) are enriched in gly residues. Basic and acidic residues-rich tracts occupy residues 394 to 413 (PPRR…DVKP) and 429 to 441 (RGRD…DYGS). The segment covering 457-472 (GDYGYGSHAGGYGAPG) has biased composition (gly residues). 2 stretches are compositionally biased toward low complexity: residues 473–486 (AGAA…WHQQ) and 494–513 (GASA…VPGM). Composition is skewed to pro residues over residues 517-531 (GAPP…PPGM) and 540-566 (SPPP…PPSA).

Belongs to the BBP/SF1 family.

The protein localises to the nucleus. Its function is as follows. Necessary for the splicing of pre-mRNA. Has a role in the recognition of the branch site (5'-UACUAAC-3'), the pyrimidine tract and the 3'-splice site at the 3'-end of introns. The polypeptide is Branchpoint-bridging protein (bbp) (Aspergillus fumigatus (strain ATCC MYA-4609 / CBS 101355 / FGSC A1100 / Af293) (Neosartorya fumigata)).